Here is a 419-residue protein sequence, read N- to C-terminus: Histidine--tRNA ligase (419 aa).

The protein belongs to the class-II aminoacyl-tRNA synthetase family.

Its subcellular location is the cytoplasm. It catalyses the reaction tRNA(His) + L-histidine + ATP = L-histidyl-tRNA(His) + AMP + diphosphate + H(+). The polypeptide is Histidine--tRNA ligase (Pyrobaculum arsenaticum (strain DSM 13514 / JCM 11321 / PZ6)).